A 244-amino-acid polypeptide reads, in one-letter code: Purine nucleoside phosphorylase HI_0175 (244 aa).

Positions 70, 105, and 122 each coordinate Zn(2+).

This sequence belongs to the purine nucleoside phosphorylase YfiH/LACC1 family. Homodimer. Cu(2+) serves as cofactor. Requires Zn(2+) as cofactor.

It catalyses the reaction adenosine + phosphate = alpha-D-ribose 1-phosphate + adenine. It carries out the reaction S-methyl-5'-thioadenosine + phosphate = 5-(methylsulfanyl)-alpha-D-ribose 1-phosphate + adenine. The enzyme catalyses inosine + phosphate = alpha-D-ribose 1-phosphate + hypoxanthine. The catalysed reaction is adenosine + H2O + H(+) = inosine + NH4(+). In terms of biological role, purine nucleoside enzyme that catalyzes the phosphorolysis of adenosine and inosine nucleosides, yielding D-ribose 1-phosphate and the respective free bases, adenine and hypoxanthine. Also catalyzes the phosphorolysis of S-methyl-5'-thioadenosine into adenine and S-methyl-5-thio-alpha-D-ribose 1-phosphate. Also has adenosine deaminase activity. This chain is Purine nucleoside phosphorylase HI_0175, found in Haemophilus influenzae (strain ATCC 51907 / DSM 11121 / KW20 / Rd).